The sequence spans 309 residues: tRNA pseudouridine synthase B (309 aa).

The active-site Nucleophile is aspartate 52.

This sequence belongs to the pseudouridine synthase TruB family. Type 1 subfamily.

The catalysed reaction is uridine(55) in tRNA = pseudouridine(55) in tRNA. Its function is as follows. Responsible for synthesis of pseudouridine from uracil-55 in the psi GC loop of transfer RNAs. This chain is tRNA pseudouridine synthase B, found in Leptospira interrogans serogroup Icterohaemorrhagiae serovar copenhageni (strain Fiocruz L1-130).